Here is a 551-residue protein sequence, read N- to C-terminus: Cu(2+) suppressing and bleomycin sensitive protein 1 (551 aa).

Coiled coils occupy residues 174 to 213 and 249 to 300; these read REID…EEID and NSLL…DSGK. A disordered region spans residues 513–551; it reads EEKAQNSTSSDGSDDDDNGESGIDSNSNDSEPESEYQQE. Over residues 532-541 the composition is skewed to low complexity; it reads ESGIDSNSND. Acidic residues predominate over residues 542–551; it reads SEPESEYQQE.

It belongs to the CUB1 family. As to quaternary structure, monomer. Phosphorylated by PKA in vitro.

Its subcellular location is the cytoplasm. The protein resides in the nucleus. Functionally, involved in bleomycin tolerance with links to DNA repair and/or proteasome function. The polypeptide is Cu(2+) suppressing and bleomycin sensitive protein 1 (CUB1) (Saccharomyces cerevisiae (strain ATCC 204508 / S288c) (Baker's yeast)).